The chain runs to 209 residues: Large ribosomal subunit protein uL3 (209 aa).

Gln150 is subject to N5-methylglutamine.

The protein belongs to the universal ribosomal protein uL3 family. In terms of assembly, part of the 50S ribosomal subunit. Forms a cluster with proteins L14 and L19. In terms of processing, methylated by PrmB.

Its function is as follows. One of the primary rRNA binding proteins, it binds directly near the 3'-end of the 23S rRNA, where it nucleates assembly of the 50S subunit. The sequence is that of Large ribosomal subunit protein uL3 from Aliivibrio fischeri (strain MJ11) (Vibrio fischeri).